Reading from the N-terminus, the 577-residue chain is Isocitrate dehydrogenase kinase/phosphatase (577 aa).

ATP contacts are provided by residues 324 to 330 (APGIRGL) and K345. The active site involves D380.

The protein belongs to the AceK family.

It localises to the cytoplasm. It catalyses the reaction L-seryl-[isocitrate dehydrogenase] + ATP = O-phospho-L-seryl-[isocitrate dehydrogenase] + ADP + H(+). In terms of biological role, bifunctional enzyme which can phosphorylate or dephosphorylate isocitrate dehydrogenase (IDH) on a specific serine residue. This is a regulatory mechanism which enables bacteria to bypass the Krebs cycle via the glyoxylate shunt in response to the source of carbon. When bacteria are grown on glucose, IDH is fully active and unphosphorylated, but when grown on acetate or ethanol, the activity of IDH declines drastically concomitant with its phosphorylation. The protein is Isocitrate dehydrogenase kinase/phosphatase of Pseudoalteromonas atlantica (strain T6c / ATCC BAA-1087).